A 340-amino-acid chain; its full sequence is MTNKNAYAQSGVDVEAGYEVVERIKKHVARTERAGVMGALGGFGGMFDLSKTGVKEPVLISGTDGVGTKLMLAIKYDKHDTIGQDCVAMCVNDIIAAGAEPLYFLDYVATGKNEPAKLEQVVAGVAEGCVQAGAALIGGETAEMPGMYGEDDYDLAGFAVGVAEKSQIIDGSKVAEGDVLLGLASSGIHSNGYSLVRRVFADYTGEEVLPELEGKKLKEVLLEPTRIYVKAVLPLIKEELVNGIAHITGGGFIENVPRMFADDLAAEIEESKVPVLPIFKALEKYGEIKHEEMFEIFNMGVGLMLAVSPENVGRVKELLDEPVYEIGRIVKKENESVIIK.

The protein belongs to the AIR synthase family.

It localises to the cytoplasm. It carries out the reaction 2-formamido-N(1)-(5-O-phospho-beta-D-ribosyl)acetamidine + ATP = 5-amino-1-(5-phospho-beta-D-ribosyl)imidazole + ADP + phosphate + H(+). It functions in the pathway purine metabolism; IMP biosynthesis via de novo pathway; 5-amino-1-(5-phospho-D-ribosyl)imidazole from N(2)-formyl-N(1)-(5-phospho-D-ribosyl)glycinamide: step 2/2. The protein is Phosphoribosylformylglycinamidine cyclo-ligase of Streptococcus gordonii (strain Challis / ATCC 35105 / BCRC 15272 / CH1 / DL1 / V288).